Reading from the N-terminus, the 433-residue chain is N-lysine methyltransferase SMYD2 (433 aa).

Positions 7-241 (GGLERFCSPG…PGEEVFTSYI (235 aa)) constitute an SET domain. S-adenosyl-L-methionine is bound at residue 17–19 (KGR). Residues cysteine 52, cysteine 55, cysteine 65, cysteine 68, cysteine 74, cysteine 78, histidine 86, and cysteine 90 each contribute to the Zn(2+) site. An MYND-type zinc finger spans residues 52-90 (CEYCFTRKEGLSKCGRCKQAFYCNVECQKEDWPMHKLEC). S-adenosyl-L-methionine-binding positions include histidine 137, 206-207 (NH), and 258-260 (YFF). Serine 283 is modified (phosphoserine).

Belongs to the class V-like SAM-binding methyltransferase superfamily. In terms of assembly, interacts with RNA polymerase II and HELZ. Interacts with SIN3A and HDAC1. Interacts (via MYND-type zinc finger) with EPB41L3. Interacts (via SET domain) with p53/TP53. Interacts with RB1 and HSP90AA1.

The protein resides in the cytoplasm. Its subcellular location is the cytosol. It is found in the nucleus. It catalyses the reaction L-lysyl(4)-[histone H3] + 3 S-adenosyl-L-methionine = N(6),N(6),N(6)-trimethyl-L-lysyl(4)-[histone H3] + 3 S-adenosyl-L-homocysteine + 3 H(+). The enzyme catalyses L-lysyl-[protein] + S-adenosyl-L-methionine = N(6)-methyl-L-lysyl-[protein] + S-adenosyl-L-homocysteine + H(+). Functionally, protein-lysine N-methyltransferase that methylates both histones and non-histone proteins, including p53/TP53 and RB1. Specifically trimethylates histone H3 'Lys-4' (H3K4me3) in vivo. The activity requires interaction with HSP90alpha. Shows even higher methyltransferase activity on p53/TP53. Monomethylates 'Lys-370' of p53/TP53, leading to decreased DNA-binding activity and subsequent transcriptional regulation activity of p53/TP53. Monomethylates RB1 at 'Lys-860'. This chain is N-lysine methyltransferase SMYD2 (SMYD2), found in Homo sapiens (Human).